The chain runs to 141 residues: Large ribosomal subunit protein uL13 (141 aa).

This sequence belongs to the universal ribosomal protein uL13 family. In terms of assembly, part of the 50S ribosomal subunit.

Its function is as follows. This protein is one of the early assembly proteins of the 50S ribosomal subunit, although it is not seen to bind rRNA by itself. It is important during the early stages of 50S assembly. In Helicobacter pylori (strain P12), this protein is Large ribosomal subunit protein uL13.